Consider the following 372-residue polypeptide: Fatty acid conjugase FAC2 B (372 aa).

A run of 2 helical transmembrane segments spans residues 44-64 (YFLF…SNYI) and 74-94 (IVWP…WMIG). The short motif at 95-99 (HECGH) is the Histidine box-1 element. The short motif at 131-135 (HRNHH) is the Histidine box-2 element. 3 consecutive transmembrane segments (helical) span residues 166-186 (IGLM…YIMF), 217-237 (VLFS…IVTV), and 240-260 (AMPA…ILFA). The Histidine box-3 signature appears at 304–308 (HVIHH).

This sequence belongs to the fatty acid desaturase type 1 family. As to expression, expressed exclusively in the developing seeds. Not detected in leaves.

The protein resides in the microsome membrane. It catalyses the reaction a (9Z,12Z)-octadecadienoyl-containing glycerolipid + AH2 + O2 = a (8E,10E,12Z)-octadecatrienoyl-containing glycerolipid + A + 2 H2O. It functions in the pathway lipid metabolism; polyunsaturated fatty acid biosynthesis. In terms of biological role, fatty acid conjugase converting 18:2(9Z, 12Z) to calendic acid 18:3(8E, 10E, 12Z). Converts alpha-linolenic acid (18:3(9Z, 12Z, 15Z)) into 18:4(8E, 10E, 12Z, 15Z). Also has weak activity on the mono-unsaturates 16:1(9Z) and 18:1(9Z) producing two conjugated double bonds at delta(8) and delta(10) position. The polypeptide is Fatty acid conjugase FAC2 B (Calendula officinalis (Pot marigold)).